The following is a 280-amino-acid chain: Shikimate dehydrogenase (NADP(+)) (280 aa).

Residues 18–20 (SRS) and T65 each bind shikimate. K69 functions as the Proton acceptor in the catalytic mechanism. Shikimate is bound by residues N90 and D105. Residues 130–134 (GAGGA), 154–159 (NRTLAR), and L219 contribute to the NADP(+) site. Shikimate is bound at residue Y221. Position 242 (G242) interacts with NADP(+).

This sequence belongs to the shikimate dehydrogenase family. Homodimer.

It catalyses the reaction shikimate + NADP(+) = 3-dehydroshikimate + NADPH + H(+). It participates in metabolic intermediate biosynthesis; chorismate biosynthesis; chorismate from D-erythrose 4-phosphate and phosphoenolpyruvate: step 4/7. Involved in the biosynthesis of the chorismate, which leads to the biosynthesis of aromatic amino acids. Catalyzes the reversible NADPH linked reduction of 3-dehydroshikimate (DHSA) to yield shikimate (SA). The polypeptide is Shikimate dehydrogenase (NADP(+)) (Mesorhizobium japonicum (strain LMG 29417 / CECT 9101 / MAFF 303099) (Mesorhizobium loti (strain MAFF 303099))).